The chain runs to 151 residues: MAARREPSSDDESYEVLDLTDYARRHHWWNRLFGRNSGPLTEKYSVATQIVIGGVSGWCAGFLFQKVGKLAATAVGGGFLLLQIASHGGYIQVDWKRVEKDVNNAKRKIKKEANKSAPEINTLIEESTDFVKKNIVVSGGFVGGFLLGLAS.

The short motif at 14–17 (YEVL) is the YXXL element. 3 consecutive transmembrane segments (helical) span residues 44 to 64 (YSVATQIVIGGVSGWCAGFLF), 71 to 91 (AATAVGGGFLLLQIASHGGYI), and 130 to 150 (FVKKNIVVSGGFVGGFLLGLA).

Belongs to the FUN14 family.

Its subcellular location is the mitochondrion outer membrane. Functionally, acts as an activator of hypoxia-induced mitophagy, an important mechanism for mitochondrial quality control. The sequence is that of FUN14 domain-containing protein 1A (fundc1-a) from Xenopus laevis (African clawed frog).